The primary structure comprises 166 residues: UPF0304 protein VIBHAR_01542 (166 aa).

The protein belongs to the UPF0304 family.

This chain is UPF0304 protein VIBHAR_01542, found in Vibrio campbellii (strain ATCC BAA-1116).